The primary structure comprises 475 residues: MPGVSAHGLSCEERRQLAVDLTRVLALYRSILDAYIIEFFTDSLWGTLPHAWQEVLDGLNPPELATLLLGMPREGEEIRYRSVWPLTLLALKSTACALAFTRTPGFHTPSEFLENPSQSSRLTAPFRKHVKPKKQHEIRRLGELVKKLSDLTGCTQVVDVGSGQGHLSRFMSLGLGLMVKSLEGNKRLVARAQRLDQELLQALDKMEKRHPKMVQRSPRHRPHHVVQWVSPTTLCEELLLPLEMPGQSSTRLLLTGLHACGDLSVALLRHFCCCPEVVALASVGCCYMKLSDPGSYPLSQWVAGLPGHELPYRLREGACHALEDYAERLQKAGPGLQTHCFRAALEAVIRQVCPELRRPGVQGIPRVHELKIEEYVQQGLQRVGLDPQLPLDQAALQAHQAQENRVVAFFSLALLLAPLVETLILLDRMLYLQEQGFYAELLPIFSPELSPRNLVLVATKTPLGQAFSILETEDS.

Positions 185–210 (NKRLVARAQRLDQELLQALDKMEKRH) form a coiled coil. Residues 406–426 (VVAFFSLALLLAPLVETLILL) form a helical membrane-spanning segment.

Belongs to the METTL25 family.

The protein resides in the membrane. The sequence is that of Methyltransferase-like protein 25B from Rattus norvegicus (Rat).